Consider the following 397-residue polypeptide: tRNA-specific 2-thiouridylase MnmA (397 aa).

Residues alanine 19 to serine 26 and leucine 45 contribute to the ATP site. The active-site Nucleophile is the cysteine 113. A disulfide bridge connects residues cysteine 113 and cysteine 210. Residue glycine 137 coordinates ATP. An interaction with tRNA region spans residues arginine 160–glutamine 162. Catalysis depends on cysteine 210, which acts as the Cysteine persulfide intermediate.

The protein belongs to the MnmA/TRMU family.

The protein resides in the cytoplasm. It catalyses the reaction S-sulfanyl-L-cysteinyl-[protein] + uridine(34) in tRNA + AH2 + ATP = 2-thiouridine(34) in tRNA + L-cysteinyl-[protein] + A + AMP + diphosphate + H(+). Functionally, catalyzes the 2-thiolation of uridine at the wobble position (U34) of tRNA, leading to the formation of s(2)U34. This Bradyrhizobium sp. (strain ORS 278) protein is tRNA-specific 2-thiouridylase MnmA.